A 709-amino-acid polypeptide reads, in one-letter code: Kelch-like protein 11 (709 aa).

An N-terminal signal peptide occupies residues 1–15 (MAAAVAAAAAAAAAA). Residues 95 to 171 (CDITLCFGGA…MYTGRIRVST (77 aa)) enclose the BTB domain. The region spanning 206–308 (CVAIHSLAHM…KPTYLTRHVK (103 aa)) is the BACK domain. Kelch repeat units follow at residues 361–408 (VIMV…ITES), 409–454 (YVYV…EVKG), 456–502 (LYSI…AIED), 504–557 (FVYI…VVNS), and 611–662 (DVFI…HVRI). Residue serine 466 is modified to Phosphoserine.

As to quaternary structure, homodimer. Interacts with CUL3. Component of a cullin-RING-based BCR (BTB-CUL3-RBX1) E3 ubiquitin-protein ligase complex.

Functionally, component of a cullin-RING-based BCR (BTB-CUL3-RBX1) E3 ubiquitin-protein ligase complex that mediates the ubiquitination of target proteins, leading most often to their proteasomal degradation. The protein is Kelch-like protein 11 (Klhl11) of Mus musculus (Mouse).